The chain runs to 317 residues: Cytochrome f (317 aa).

Positions M1 to A34 are cleaved as a signal peptide. Residues Y35, C55, C58, and H59 each coordinate heme. The helical transmembrane segment at V284 to K304 threads the bilayer.

Belongs to the cytochrome f family. In terms of assembly, the 4 large subunits of the cytochrome b6-f complex are cytochrome b6, subunit IV (17 kDa polypeptide, PetD), cytochrome f and the Rieske protein, while the 4 small subunits are PetG, PetL, PetM and PetN. The complex functions as a dimer. Requires heme as cofactor.

The protein localises to the cellular thylakoid membrane. Functionally, component of the cytochrome b6-f complex, which mediates electron transfer between photosystem II (PSII) and photosystem I (PSI), cyclic electron flow around PSI, and state transitions. In Prochlorococcus marinus (strain MIT 9215), this protein is Cytochrome f.